Reading from the N-terminus, the 727-residue chain is MGRRAKMVEKVKTLMETHDQIRNMGICAHIDHGKTTLSDNLLAGAGMISKELAGDQLALDFDEEEAARGITIYAANVSMVHEYGGKEYLINLIDTPGHVDFGGDVTRAMRAIDGAVVVCCAVEGVMPQTETVLRQALKEKVKPVLFINKVDRLINELKLTPEELQGRFMKIIAEVNKLIEKMAPEEFKTEWLCDVANGKVAFGSAYNNWAISVPYMQRSGISFKDIIDYCEQEKQGELADKAPLHEVVLDMSIKHLPNPLQAQKYRIPNIWKGDAESAIGKSMVECNPNGPLAGVVTKIIVDKHAGAISACRLFSGRIKQGDDLYLVGSKQKARAQQVSIFMGAERVQVPSISAGNICALTGLREATAGETVCSPSEILEPGFESLSHTSEPVITVAIEAKNTKDLPKLIEILRQIAREDNTVRVEINEETGEHLISGMGELHIEVITNTKIGRDGGIEVDVGEPIVVYRETIMGTSPEIEGKSPNKHNKLYMIAEPMEESVYAAYVEGKLHDEDYKKKTTADGEARLVEAGLEKDQAKKVMSIYNGNMIVNMTRGIVQLDEARELIIEGFKEGVRNGPLAAEKVQGVKIKLMDATFHEDAIHRGPAQIIPAVRFGVRDAVSQAKPVLLEPMQSVYINTPQDYMGDGMKEINNRRGQILDMEQEGDMSIIKSSVPVAEMFGFAGAIRGATQGRCLWSVEFSGFEKVPGELQPKIVKQIRDRKGLKSE.

Positions 19–260 constitute a tr-type G domain; it reads DQIRNMGICA…MSIKHLPNPL (242 aa). Residues 28-35, 94-98, and 148-151 each bind GTP; these read AHIDHGKT, DTPGH, and NKVD. A Diphthamide modification is found at histidine 603.

Belongs to the TRAFAC class translation factor GTPase superfamily. Classic translation factor GTPase family. EF-G/EF-2 subfamily.

The protein localises to the cytoplasm. Functionally, catalyzes the GTP-dependent ribosomal translocation step during translation elongation. During this step, the ribosome changes from the pre-translocational (PRE) to the post-translocational (POST) state as the newly formed A-site-bound peptidyl-tRNA and P-site-bound deacylated tRNA move to the P and E sites, respectively. Catalyzes the coordinated movement of the two tRNA molecules, the mRNA and conformational changes in the ribosome. The polypeptide is Elongation factor 2 (Methanococcus maripaludis (strain C5 / ATCC BAA-1333)).